The following is a 456-amino-acid chain: uncharacterized protein (456 aa).

The next 11 helical transmembrane spans lie at S12 to L32, F63 to A83, V86 to A106, W143 to F163, I179 to G199, S208 to L228, I237 to L257, F305 to W325, I348 to W368, L390 to I410, and V414 to I434.

The protein belongs to the alanine or glycine:cation symporter (AGCS) (TC 2.A.25) family.

It is found in the cell inner membrane. This is an uncharacterized protein from Haemophilus influenzae (strain ATCC 51907 / DSM 11121 / KW20 / Rd).